Consider the following 781-residue polypeptide: Aconitate hydratase, mitochondrial (781 aa).

The N-terminal 27 residues, 1–27 (MAPYSLLVTRLQKALGVRQYHVASVLC), are a transit peptide targeting the mitochondrion. A Pyrrolidone carboxylic acid modification is found at Gln-28. The residue at position 31 (Lys-31) is an N6-succinyllysine. Residue Lys-50 is modified to N6-acetyllysine; alternate. Lys-50 bears the N6-succinyllysine; alternate mark. Substrate is bound at residue Gln-99. N6-acetyllysine; alternate is present on residues Lys-138 and Lys-144. 2 positions are modified to N6-succinyllysine; alternate: Lys-138 and Lys-144. 192-194 (DSH) contributes to the substrate binding site. Lys-233 bears the N6-acetyllysine; alternate mark. At Lys-233 the chain carries N6-succinyllysine; alternate. Cys-385 lines the [4Fe-4S] cluster pocket. At Lys-411 the chain carries N6-succinyllysine. Cys-448 and Cys-451 together coordinate [4Fe-4S] cluster. Arg-474 and Arg-479 together coordinate substrate. Residues Lys-517 and Lys-523 each carry the N6-acetyllysine; alternate modification. N6-succinyllysine; alternate is present on residues Lys-517 and Lys-523. Positions 524 to 537 (LEAPDADELPRAEF) are enriched in basic and acidic residues. The segment at 524 to 561 (LEAPDADELPRAEFDPGQDTYQHPPKDSSGQRVDVSPT) is disordered. An N6-succinyllysine modification is found at Lys-549. The segment covering 551-561 (SSGQRVDVSPT) has biased composition (polar residues). The residue at position 559 (Ser-559) is a Phosphoserine. Lys-573 carries the N6-acetyllysine; alternate modification. An N6-succinyllysine; alternate modification is found at Lys-573. 2 positions are modified to N6-succinyllysine: Lys-577 and Lys-591. The residue at position 605 (Lys-605) is an N6-acetyllysine; alternate. Lys-605 is modified (N6-succinyllysine; alternate). Substrate is bound at residue Arg-607. Position 628 is an N6-succinyllysine (Lys-628). At Ser-670 the chain carries Phosphoserine. Substrate is bound at residue 670 to 671 (SR). Lys-689 is modified (N6-succinyllysine). Lys-723 and Lys-730 each carry N6-acetyllysine; alternate. Residues Lys-723 and Lys-730 each carry the N6-succinyllysine; alternate modification. 3 positions are modified to N6-acetyllysine: Lys-736, Lys-739, and Lys-743.

Belongs to the aconitase/IPM isomerase family. In terms of assembly, monomer. [4Fe-4S] cluster is required as a cofactor. Forms covalent cross-links mediated by transglutaminase TGM2, between a glutamine and the epsilon-amino group of a lysine residue, forming homopolymers and heteropolymers.

Its subcellular location is the mitochondrion. It carries out the reaction citrate = D-threo-isocitrate. Its pathway is carbohydrate metabolism; tricarboxylic acid cycle; isocitrate from oxaloacetate: step 2/2. Its function is as follows. Catalyzes the isomerization of citrate to isocitrate via cis-aconitate. This is Aconitate hydratase, mitochondrial (ACO2) from Sus scrofa (Pig).